The following is a 295-amino-acid chain: Ribosomal RNA small subunit methyltransferase A (295 aa).

S-adenosyl-L-methionine-binding residues include asparagine 29, leucine 31, glycine 56, glutamate 77, aspartate 102, and asparagine 128.

The protein belongs to the class I-like SAM-binding methyltransferase superfamily. rRNA adenine N(6)-methyltransferase family. RsmA subfamily.

Its subcellular location is the cytoplasm. It catalyses the reaction adenosine(1518)/adenosine(1519) in 16S rRNA + 4 S-adenosyl-L-methionine = N(6)-dimethyladenosine(1518)/N(6)-dimethyladenosine(1519) in 16S rRNA + 4 S-adenosyl-L-homocysteine + 4 H(+). In terms of biological role, specifically dimethylates two adjacent adenosines (A1518 and A1519) in the loop of a conserved hairpin near the 3'-end of 16S rRNA in the 30S particle. May play a critical role in biogenesis of 30S subunits. The polypeptide is Ribosomal RNA small subunit methyltransferase A (Listeria monocytogenes serotype 4a (strain HCC23)).